A 119-amino-acid polypeptide reads, in one-letter code: Ribonuclease P protein component (119 aa).

It belongs to the RnpA family. As to quaternary structure, consists of a catalytic RNA component (M1 or rnpB) and a protein subunit.

The catalysed reaction is Endonucleolytic cleavage of RNA, removing 5'-extranucleotides from tRNA precursor.. Functionally, RNaseP catalyzes the removal of the 5'-leader sequence from pre-tRNA to produce the mature 5'-terminus. It can also cleave other RNA substrates such as 4.5S RNA. The protein component plays an auxiliary but essential role in vivo by binding to the 5'-leader sequence and broadening the substrate specificity of the ribozyme. The chain is Ribonuclease P protein component from Escherichia coli O6:H1 (strain CFT073 / ATCC 700928 / UPEC).